The following is a 505-amino-acid chain: ATP synthase subunit beta (505 aa).

Position 157–164 (157–164 (GGAGVGKT)) interacts with ATP.

This sequence belongs to the ATPase alpha/beta chains family. As to quaternary structure, F-type ATPases have 2 components, CF(1) - the catalytic core - and CF(0) - the membrane proton channel. CF(1) has five subunits: alpha(3), beta(3), gamma(1), delta(1), epsilon(1). CF(0) has three main subunits: a(1), b(2) and c(9-12). The alpha and beta chains form an alternating ring which encloses part of the gamma chain. CF(1) is attached to CF(0) by a central stalk formed by the gamma and epsilon chains, while a peripheral stalk is formed by the delta and b chains.

Its subcellular location is the cell inner membrane. It carries out the reaction ATP + H2O + 4 H(+)(in) = ADP + phosphate + 5 H(+)(out). Its function is as follows. Produces ATP from ADP in the presence of a proton gradient across the membrane. The catalytic sites are hosted primarily by the beta subunits. The chain is ATP synthase subunit beta from Bacteroides thetaiotaomicron (strain ATCC 29148 / DSM 2079 / JCM 5827 / CCUG 10774 / NCTC 10582 / VPI-5482 / E50).